Consider the following 597-residue polypeptide: 2-isopropylmalate synthase (597 aa).

The unknown stretch occupies residues 1 to 80 (MQLDIDRLVA…QKNESLERTE (80 aa)). One can recognise a Pyruvate carboxyltransferase domain in the interval 87–349 (VIIFDTTLRD…ETGIDTTQIV (263 aa)). The segment at 87–349 (VIIFDTTLRD…ETGIDTTQIV (263 aa)) is 2-isopropylmalate synthase. The Mn(2+) site is built by D96, H284, H286, and N320. The interval 475 to 597 (KFISQKISTE…KPKAQGSGTI (123 aa)) is regulatory domain.

This sequence belongs to the alpha-IPM synthase/homocitrate synthase family. LeuA type 1 subfamily. As to quaternary structure, homodimer. Mn(2+) serves as cofactor.

Its subcellular location is the cytoplasm. The catalysed reaction is 3-methyl-2-oxobutanoate + acetyl-CoA + H2O = (2S)-2-isopropylmalate + CoA + H(+). It participates in amino-acid biosynthesis; L-leucine biosynthesis; L-leucine from 3-methyl-2-oxobutanoate: step 1/4. Catalyzes the condensation of the acetyl group of acetyl-CoA with 3-methyl-2-oxobutanoate (2-ketoisovalerate) to form 3-carboxy-3-hydroxy-4-methylpentanoate (2-isopropylmalate). This chain is 2-isopropylmalate synthase, found in Neisseria gonorrhoeae (strain ATCC 700825 / FA 1090).